The following is a 296-amino-acid chain: Pseudouridine-5'-phosphate glycosidase (296 aa).

Glu21 (proton donor) is an active-site residue. The substrate site is built by Lys81 and Val101. Residue Asp130 participates in Mn(2+) binding. 132–134 (SQD) contributes to the substrate binding site. The active-site Nucleophile is Lys151.

It belongs to the pseudouridine-5'-phosphate glycosidase family. As to quaternary structure, homotrimer. The cofactor is Mn(2+).

The enzyme catalyses D-ribose 5-phosphate + uracil = psi-UMP + H2O. Catalyzes the reversible cleavage of pseudouridine 5'-phosphate (PsiMP) to ribose 5-phosphate and uracil. Functions biologically in the cleavage direction, as part of a pseudouridine degradation pathway. In Fervidobacterium nodosum (strain ATCC 35602 / DSM 5306 / Rt17-B1), this protein is Pseudouridine-5'-phosphate glycosidase.